The chain runs to 363 residues: MAGNSIGQLFRVTTCGESHGVGLMAIVDGVPPGLELCEEDLQKDLDRRKPGTSKFATQRKEPDQVKIISGVFEGKTTGTSIGLYIENTDQKSKDYGNIAQTFRPGHADYTYTQKYGFRDYRGGGRSSARETAMRVAAGAIAKKYLAEKFGLVVRGHVIQIGNEVAEKLDWNEVSQNPFFCGDVDAVPRFEALVTSLREQGTSCGAKLEILAEQVPVGWGEPVFDRLDADIAHAMMSINAVKGVEIGDGFAVAGQFGHETRDELSTQGFLANHAGGILGGISSGQTIRVAIALKPTASITTSGKTINLDREDTDVLTKGRHDPCVGVRATPIAEAMLAIVLMDHFLRHRAQNADVVMPFEPIAP.

An NADP(+)-binding site is contributed by R48. Residues 125 to 127 (RSS), 238 to 239 (NA), G278, 293 to 297 (KPTAS), and R319 contribute to the FMN site.

Belongs to the chorismate synthase family. As to quaternary structure, homotetramer. FMNH2 serves as cofactor.

It catalyses the reaction 5-O-(1-carboxyvinyl)-3-phosphoshikimate = chorismate + phosphate. It participates in metabolic intermediate biosynthesis; chorismate biosynthesis; chorismate from D-erythrose 4-phosphate and phosphoenolpyruvate: step 7/7. Functionally, catalyzes the anti-1,4-elimination of the C-3 phosphate and the C-6 proR hydrogen from 5-enolpyruvylshikimate-3-phosphate (EPSP) to yield chorismate, which is the branch point compound that serves as the starting substrate for the three terminal pathways of aromatic amino acid biosynthesis. This reaction introduces a second double bond into the aromatic ring system. This chain is Chorismate synthase, found in Acinetobacter baylyi (strain ATCC 33305 / BD413 / ADP1).